The chain runs to 215 residues: Large ribosomal subunit protein uL4 (215 aa).

The segment at 43 to 101 is disordered; that stretch reads HQRQGTSKTKERGEVRGSGRKLYRQKGTGNARVGDAQSPIRRGGGRAHGARPRDYAHDL. A compositionally biased stretch (basic and acidic residues) spans 50 to 59; it reads KTKERGEVRG.

It belongs to the universal ribosomal protein uL4 family. As to quaternary structure, part of the 50S ribosomal subunit.

In terms of biological role, one of the primary rRNA binding proteins, this protein initially binds near the 5'-end of the 23S rRNA. It is important during the early stages of 50S assembly. It makes multiple contacts with different domains of the 23S rRNA in the assembled 50S subunit and ribosome. Functionally, forms part of the polypeptide exit tunnel. This Salinibacter ruber (strain DSM 13855 / M31) protein is Large ribosomal subunit protein uL4.